The sequence spans 615 residues: Elongation factor 4 (615 aa).

Residues 14-200 (SRIRNFCIIA…KVVELIPAPS (187 aa)) form the tr-type G domain. Residues 26-31 (DHGKST) and 147-150 (NKID) contribute to the GTP site.

Belongs to the TRAFAC class translation factor GTPase superfamily. Classic translation factor GTPase family. LepA subfamily.

The protein resides in the cell membrane. It carries out the reaction GTP + H2O = GDP + phosphate + H(+). Its function is as follows. Required for accurate and efficient protein synthesis under certain stress conditions. May act as a fidelity factor of the translation reaction, by catalyzing a one-codon backward translocation of tRNAs on improperly translocated ribosomes. Back-translocation proceeds from a post-translocation (POST) complex to a pre-translocation (PRE) complex, thus giving elongation factor G a second chance to translocate the tRNAs correctly. Binds to ribosomes in a GTP-dependent manner. In Corynebacterium efficiens (strain DSM 44549 / YS-314 / AJ 12310 / JCM 11189 / NBRC 100395), this protein is Elongation factor 4.